The sequence spans 347 residues: NADH-quinone oxidoreductase subunit H (347 aa).

9 helical membrane passes run 13–33 (IIMIGQSLLLLVCLLVFIAYV), 50–70 (PNVVGPFGLFQSFADLLKFVF), 82–102 (AVFLLAPLVTVLLALSTWAVV), 115–135 (VGILYIFAISSLEVYGIIMGG), 161–181 (IGFVIVTVLLCVGSLNLTDIV), 198–218 (FLDWHWLSLFPMFIIFFISAL), 263–283 (CALTTILFLGGWLPPVDIWIL), 286–306 (VPGIIWFTLKACFVFFMFAMV), and 321–341 (LGWKVFLPLSLAMVVIVAFVL).

This sequence belongs to the complex I subunit 1 family. NDH-1 is composed of 14 different subunits. Subunits NuoA, H, J, K, L, M, N constitute the membrane sector of the complex.

Its subcellular location is the cell inner membrane. It catalyses the reaction a quinone + NADH + 5 H(+)(in) = a quinol + NAD(+) + 4 H(+)(out). NDH-1 shuttles electrons from NADH, via FMN and iron-sulfur (Fe-S) centers, to quinones in the respiratory chain. The immediate electron acceptor for the enzyme in this species is believed to be ubiquinone. Couples the redox reaction to proton translocation (for every two electrons transferred, four hydrogen ions are translocated across the cytoplasmic membrane), and thus conserves the redox energy in a proton gradient. This subunit may bind ubiquinone. The chain is NADH-quinone oxidoreductase subunit H from Rhizobium johnstonii (strain DSM 114642 / LMG 32736 / 3841) (Rhizobium leguminosarum bv. viciae).